Reading from the N-terminus, the 241-residue chain is Phosphoadenosine 5'-phosphosulfate reductase (241 aa).

Residues G221–A241 form a disordered region. Catalysis depends on C237, which acts as the Nucleophile; cysteine thiosulfonate intermediate.

This sequence belongs to the PAPS reductase family. CysH subfamily.

Its subcellular location is the cytoplasm. It catalyses the reaction [thioredoxin]-disulfide + sulfite + adenosine 3',5'-bisphosphate + 2 H(+) = [thioredoxin]-dithiol + 3'-phosphoadenylyl sulfate. Its pathway is sulfur metabolism; hydrogen sulfide biosynthesis; sulfite from sulfate: step 3/3. Functionally, catalyzes the formation of sulfite from phosphoadenosine 5'-phosphosulfate (PAPS) using thioredoxin as an electron donor. This is Phosphoadenosine 5'-phosphosulfate reductase from Gloeobacter violaceus (strain ATCC 29082 / PCC 7421).